A 257-amino-acid chain; its full sequence is ADP-dependent (S)-NAD(P)H-hydrate dehydratase (257 aa).

The YjeF C-terminal domain occupies 1–257 (MGRLQRTLSN…VIERIPDTIR (257 aa)). Gly200 contacts AMP. A (6S)-NADPHX-binding site is contributed by Asp201.

The protein belongs to the NnrD/CARKD family. In terms of assembly, homotetramer. The cofactor is Mg(2+).

It catalyses the reaction (6S)-NADHX + ADP = AMP + phosphate + NADH + H(+). It carries out the reaction (6S)-NADPHX + ADP = AMP + phosphate + NADPH + H(+). Its function is as follows. Catalyzes the dehydration of the S-form of NAD(P)HX at the expense of ADP, which is converted to AMP. Together with NAD(P)HX epimerase, which catalyzes the epimerization of the S- and R-forms, the enzyme allows the repair of both epimers of NAD(P)HX, a damaged form of NAD(P)H that is a result of enzymatic or heat-dependent hydration. The protein is ADP-dependent (S)-NAD(P)H-hydrate dehydratase of Haloterrigena turkmenica (strain ATCC 51198 / DSM 5511 / JCM 9101 / NCIMB 13204 / VKM B-1734 / 4k) (Halococcus turkmenicus).